The chain runs to 646 residues: Lamin-1 (646 aa).

Residues 1-85 (MAEKAGEAGV…GSRATSPTSF (85 aa)) are head. The tract at residues 1-94 (MAEKAGEAGV…FSRAQEKEEL (94 aa)) is disordered. Polar residues-rich tracts occupy residues 48-67 (ATPS…SMSL) and 75-87 (QGSR…SFSR). Residues 86 to 126 (SRAQEKEELQNLNDRLAKILNKLNDSEEENRTLKIRLTTVQ) are coil 1A. The IF rod domain occupies 90–446 (EKEELQNLND…KLLSDEEIRL (357 aa)). Positions 127–137 (QETSADLNDQI) are linker 1. The segment at 138-281 (GKYRDELERA…SKLQRQSLSV (144 aa)) is coil 1B. Polar residues predominate over residues 281-301 (VTTVDHHSAQSTSRRSGSDFS). Residues 281–304 (VTTVDHHSAQSTSRRSGSDFSASV) are disordered. The interval 282–299 (TTVDHHSAQSTSRRSGSD) is linker 2. Residues 300-439 (FSASVEDMRS…TELEMYNKLL (140 aa)) form a coil 2 region. Residues 440 to 646 (SDEEIRLGIT…GKGILGFFGL (207 aa)) form a tail region. The Nuclear localization signal motif lies at 457–471 (VRHGAKKRKLTETFY). Residues 476–487 (GSRSSAGSRSAG) are compositionally biased toward low complexity. The tract at residues 476 to 513 (GSRSSAGSRSAGHNSTPVTKSQVTRTTVKTSENKSKAS) is disordered. Residues 488–505 (HNSTPVTKSQVTRTTVKT) show a composition bias toward polar residues. The 115-residue stretch at 504–618 (KTSENKSKAS…NQMATYEVSA (115 aa)) folds into the LTD domain.

The protein belongs to the intermediate filament family.

Its subcellular location is the nucleus. Intermediate filament (IF) protein, component of the nuclear lamina, a fibrous layer on the nucleoplasmic side of the inner nuclear membrane, which is thought to provide a framework for the nuclear envelope. The protein is Lamin-1 of Hypsibius exemplaris (Freshwater tardigrade).